Consider the following 422-residue polypeptide: Gamma-glutamyl phosphate reductase (422 aa).

The protein belongs to the gamma-glutamyl phosphate reductase family.

The protein localises to the cytoplasm. It catalyses the reaction L-glutamate 5-semialdehyde + phosphate + NADP(+) = L-glutamyl 5-phosphate + NADPH + H(+). It participates in amino-acid biosynthesis; L-proline biosynthesis; L-glutamate 5-semialdehyde from L-glutamate: step 2/2. In terms of biological role, catalyzes the NADPH-dependent reduction of L-glutamate 5-phosphate into L-glutamate 5-semialdehyde and phosphate. The product spontaneously undergoes cyclization to form 1-pyrroline-5-carboxylate. The protein is Gamma-glutamyl phosphate reductase of Saccharophagus degradans (strain 2-40 / ATCC 43961 / DSM 17024).